Reading from the N-terminus, the 309-residue chain is tRNA pseudouridine synthase B (309 aa).

The Nucleophile role is filled by D45.

Belongs to the pseudouridine synthase TruB family. Type 1 subfamily.

The catalysed reaction is uridine(55) in tRNA = pseudouridine(55) in tRNA. Functionally, responsible for synthesis of pseudouridine from uracil-55 in the psi GC loop of transfer RNAs. This chain is tRNA pseudouridine synthase B, found in Oleidesulfovibrio alaskensis (strain ATCC BAA-1058 / DSM 17464 / G20) (Desulfovibrio alaskensis).